We begin with the raw amino-acid sequence, 736 residues long: Transcription regulator protein BACH1 (736 aa).

In terms of domain architecture, BTB spans 34–100; the sequence is CDVTIFVEGQ…AYTAKLILSK (67 aa). S196 bears the Phosphoserine mark. Positions 286–295 are enriched in basic and acidic residues; that stretch reads MEPEETKKDP. 2 disordered regions span residues 286–312 and 349–389; these read MEPEETKKDPASQCPTEKSEVTPFPHN and KPLS…RSSV. 2 positions are modified to phosphoserine: S364 and S445. Positions 557 to 620 constitute a bZIP domain; sequence CIHDIRRRSK…GETKQNLTGL (64 aa). Residues 562 to 578 form a basic motif region; that stretch reads RRRSKNRIAAQRCRKRK. Residues 582–589 form a leucine-zipper region; that stretch reads IQNLESEI. Residues 680-719 are disordered; that stretch reads LPPCARGNSEPGYARGQESQQMSTATSEQAGPAEQCRQSG. Residues 696 to 708 are compositionally biased toward polar residues; it reads QESQQMSTATSEQ.

This sequence belongs to the bZIP family. CNC subfamily. Heterodimer of BACH1 and MAFK. Ubiquitinated by the SCF(FBXL17) complex or by the by the SCF(FBXO22) complex, leading to its degradation by the proteasome. Under oxidative stress, reactive oxygen species covalently modify cysteine residues on the bZIP domain of BACH1 and release it from chromatin. If the BTB domain of BACH1 remains intact, its beta1-alpha6 degron is recognized by FBXO22, promoting its ubiquitination and degradation. If the structural integrity of the beta1-alpha6 degron is compromised, FBXL17 will transiently associate with the BACH1 BTB dimer and remodel it into stably bound monomer for ubiquitination and degradation.

The protein localises to the nucleus. In terms of biological role, transcriptional regulator that acts as a repressor or activator, depending on the context. Binds to NF-E2 DNA binding sites. Plays important roles in coordinating transcription activation and repression by MAFK. Together with MAF, represses the transcription of genes under the control of the NFE2L2 oxidative stress pathway. This is Transcription regulator protein BACH1 from Homo sapiens (Human).